Here is a 271-residue protein sequence, read N- to C-terminus: Pyrroline-5-carboxylate reductase (271 aa).

This sequence belongs to the pyrroline-5-carboxylate reductase family.

The protein localises to the cytoplasm. The enzyme catalyses L-proline + NADP(+) = (S)-1-pyrroline-5-carboxylate + NADPH + 2 H(+). The catalysed reaction is L-proline + NAD(+) = (S)-1-pyrroline-5-carboxylate + NADH + 2 H(+). The protein operates within amino-acid biosynthesis; L-proline biosynthesis; L-proline from L-glutamate 5-semialdehyde: step 1/1. Functionally, catalyzes the reduction of 1-pyrroline-5-carboxylate (PCA) to L-proline. This is Pyrroline-5-carboxylate reductase from Staphylococcus saprophyticus subsp. saprophyticus (strain ATCC 15305 / DSM 20229 / NCIMB 8711 / NCTC 7292 / S-41).